Here is a 360-residue protein sequence, read N- to C-terminus: Phospho-N-acetylmuramoyl-pentapeptide-transferase (360 aa).

Residues 1–25 (MLVWLAEHLVKYYSGFNVFSYLTFR) lie on the Periplasmic side of the membrane. The helical transmembrane segment at 26–46 (AIVSLLTALFISLWMGPRMIA) threads the bilayer. Over 47–71 (RLQKLSFGQVVRNDGPESHFSKRGT) the chain is Cytoplasmic. Residues 72–92 (PTMGGIMILTAIVISVLLWAY) form a helical membrane-spanning segment. Position 93 (Pro-93) is a topological domain, periplasmic. Residues 94–114 (SNPYVWCVLVVLIGYGIIGFV) form a helical membrane-spanning segment. Residues 115–131 (DDYHKVVRKDTKGLIAR) are Cytoplasmic-facing. The chain crosses the membrane as a helical span at residues 132–152 (WKYFWMSVIALGVAFALYLVG). At 153–167 (KDTPATQLVVPFFKD) the chain is on the periplasmic side. Residues 168–188 (VMPQLGLFYILLSYFVIVGTG) form a helical membrane-spanning segment. The Cytoplasmic segment spans residues 189 to 198 (NAVNLTDGLD). Residues 199 to 219 (GLAIMPTVFVAAGFALVAWAT) traverse the membrane as a helical segment. Over 220-235 (GNMNFANYLHIPYLRY) the chain is Periplasmic. Residues 236–256 (AGELVIVCTAIVGAGLGFLWF) form a helical membrane-spanning segment. Topologically, residues 257–262 (NTYPAQ) are cytoplasmic. Residues 263–283 (VFMGDVGSLALGGALGIIAVL) traverse the membrane as a helical segment. At 284–287 (LRQE) the chain is on the periplasmic side. The chain crosses the membrane as a helical span at residues 288 to 308 (FLLVIMGGVFVVETLSVILQV). Over 309 to 337 (GSFKLRGQRIFRMAPIHHHYELKGWPEPR) the chain is Cytoplasmic. Residues 338–358 (VIVRFWIISLMLVLIGLATLK) traverse the membrane as a helical segment. Residues 359-360 (VR) are Periplasmic-facing.

It belongs to the glycosyltransferase 4 family. MraY subfamily. The cofactor is Mg(2+).

The protein localises to the cell inner membrane. The catalysed reaction is UDP-N-acetyl-alpha-D-muramoyl-L-alanyl-gamma-D-glutamyl-meso-2,6-diaminopimeloyl-D-alanyl-D-alanine + di-trans,octa-cis-undecaprenyl phosphate = di-trans,octa-cis-undecaprenyl diphospho-N-acetyl-alpha-D-muramoyl-L-alanyl-D-glutamyl-meso-2,6-diaminopimeloyl-D-alanyl-D-alanine + UMP. It functions in the pathway cell wall biogenesis; peptidoglycan biosynthesis. Catalyzes the initial step of the lipid cycle reactions in the biosynthesis of the cell wall peptidoglycan: transfers peptidoglycan precursor phospho-MurNAc-pentapeptide from UDP-MurNAc-pentapeptide onto the lipid carrier undecaprenyl phosphate, yielding undecaprenyl-pyrophosphoryl-MurNAc-pentapeptide, known as lipid I. The sequence is that of Phospho-N-acetylmuramoyl-pentapeptide-transferase from Salmonella paratyphi A (strain ATCC 9150 / SARB42).